Here is a 144-residue protein sequence, read N- to C-terminus: Hemoglobin embryonic subunit alpha (144 aa).

A Globin domain is found at 3–144 (SLSAKDKDVV…LALALAEKYR (142 aa)). An O2-binding site is contributed by H61. H90 provides a ligand contact to heme b.

Belongs to the globin family. As to quaternary structure, heterotetramer of two alpha chains and two beta chains. Red blood cells.

Functionally, involved in oxygen transport from gills to the various peripheral tissues. The polypeptide is Hemoglobin embryonic subunit alpha (Oryzias latipes (Japanese rice fish)).